The following is a 524-amino-acid chain: Metal transporter Nramp2 (524 aa).

The interval 34 to 58 (AYDSDDKVSIAVSDSDSEDGGGGGG) is disordered. The next 12 membrane-spanning stretches (helical) occupy residues 70 to 90 (LWRF…PGNL), 98 to 118 (AAAG…GALV), 155 to 175 (LALV…IKIL), 179 to 199 (TVPL…FLFL), 207 to 227 (LEAF…IMFG), 253 to 273 (AVGI…SALV), 295 to 315 (IESI…TTVF), 341 to 361 (YGTA…ASGQ), 389 to 409 (AMIT…FFDT), 420 to 440 (ALNV…ITLV), 457 to 477 (VISW…ILSF), and 486 to 506 (LVRS…VYLI).

The protein belongs to the NRAMP (TC 2.A.55) family.

The protein resides in the membrane. Probable metal transporter. This chain is Metal transporter Nramp2 (NRAMP2), found in Oryza sativa subsp. japonica (Rice).